The primary structure comprises 169 residues: Nucleoside diphosphate kinase 3-A (169 aa).

ADP contacts are provided by K29, R105, T111, R122, V129, and N132. H135 serves as the catalytic Pros-phosphohistidine intermediate.

The protein belongs to the NDK family. In terms of assembly, homohexamer. Requires Mg(2+) as cofactor.

It is found in the mitochondrion outer membrane. The protein localises to the cytoplasm. Its subcellular location is the cytoskeleton. It localises to the cilium basal body. It catalyses the reaction a 2'-deoxyribonucleoside 5'-diphosphate + ATP = a 2'-deoxyribonucleoside 5'-triphosphate + ADP. The enzyme catalyses a ribonucleoside 5'-diphosphate + ATP = a ribonucleoside 5'-triphosphate + ADP. Its function is as follows. Catalyzes the phosphorylation of ribonucleosides and deoxyribonucleoside diphosphates, other than ATP, into the corresponding triphosphates with ATP as the major phosphate donor. The ATP gamma phosphate is transferred to the nucleoside diphosphate beta phosphate via a ping-pong mechanism, using a phosphorylated active-site intermediate. Through the catalyzed exchange of gamma-phosphate between di- and triphosphonucleosides participates in regulation of intracellular nucleotide homeostasis. Required for ciliary function during renal development. In terms of biological role, independently of its kinase activity, facilitates mitochondrial tethering prior to membrane fusion through its direct membrane-binding and hexamerization. Implicated in repair of both single- and double-stranded breaks in DNA, independently of its kinase activity. The sequence is that of Nucleoside diphosphate kinase 3-A from Xenopus laevis (African clawed frog).